The primary structure comprises 345 residues: Putative RING-H2 finger protein ATL36 (345 aa).

The N-terminal stretch at 1–31 (MNIFTRYHLPRVVSGVILPLFLFHLLPYVTC) is a signal peptide. The chain crosses the membrane as a helical span at residues 50–70 (SIIAIVVLAIFISLGMVSCCL). The segment at 123 to 165 (CAICLSEFEDQETLRWMPPCSHTFHANCIDVWLSSWSTCPVCR) adopts an RING-type; atypical zinc-finger fold. Serine 264 carries the post-translational modification Phosphoserine.

This sequence belongs to the RING-type zinc finger family. ATL subfamily.

It is found in the membrane. It catalyses the reaction S-ubiquitinyl-[E2 ubiquitin-conjugating enzyme]-L-cysteine + [acceptor protein]-L-lysine = [E2 ubiquitin-conjugating enzyme]-L-cysteine + N(6)-ubiquitinyl-[acceptor protein]-L-lysine.. Its pathway is protein modification; protein ubiquitination. The polypeptide is Putative RING-H2 finger protein ATL36 (ATL36) (Arabidopsis thaliana (Mouse-ear cress)).